A 460-amino-acid chain; its full sequence is GTPase Der (460 aa).

EngA-type G domains are found at residues 2-164 (KKVI…DDEI) and 199-370 (IKVG…ANFT). GTP-binding positions include 8-15 (GRPNVGKS), 55-59 (DSGGL), 116-119 (NKID), 205-212 (GRVNVGKS), 252-256 (DTAGI), and 316-319 (NKWD). The region spanning 371–454 (QKIATSKLND…PVILLPRKRG (84 aa)) is the KH-like domain.

Belongs to the TRAFAC class TrmE-Era-EngA-EngB-Septin-like GTPase superfamily. EngA (Der) GTPase family. In terms of assembly, associates with the 50S ribosomal subunit.

Functionally, GTPase that plays an essential role in the late steps of ribosome biogenesis. The sequence is that of GTPase Der from Campylobacter hominis (strain ATCC BAA-381 / DSM 21671 / CCUG 45161 / LMG 19568 / NCTC 13146 / CH001A).